We begin with the raw amino-acid sequence, 82 residues long: Photosystem I iron-sulfur center (82 aa).

4Fe-4S ferredoxin-type domains are found at residues 2-31 (SHTVKIYDTCIGCTQCVRACPTDVLEMVPW) and 37-68 (GQIASSPRVEDCVGCKRCETACPTDFLSVRVY). 8 residues coordinate [4Fe-4S] cluster: Cys-11, Cys-14, Cys-17, Cys-21, Cys-48, Cys-51, Cys-54, and Cys-58.

The eukaryotic PSI reaction center is composed of at least 11 subunits. It depends on [4Fe-4S] cluster as a cofactor.

The protein localises to the plastid. Its subcellular location is the chloroplast thylakoid membrane. It carries out the reaction reduced [plastocyanin] + hnu + oxidized [2Fe-2S]-[ferredoxin] = oxidized [plastocyanin] + reduced [2Fe-2S]-[ferredoxin]. Apoprotein for the two 4Fe-4S centers FA and FB of photosystem I (PSI); essential for photochemical activity. FB is the terminal electron acceptor of PSI, donating electrons to ferredoxin. The C-terminus interacts with PsaA/B/D and helps assemble the protein into the PSI complex. Required for binding of PsaD and PsaE to PSI. PSI is a plastocyanin/cytochrome c6-ferredoxin oxidoreductase, converting photonic excitation into a charge separation, which transfers an electron from the donor P700 chlorophyll pair to the spectroscopically characterized acceptors A0, A1, FX, FA and FB in turn. This Trieres chinensis (Marine centric diatom) protein is Photosystem I iron-sulfur center.